A 426-amino-acid polypeptide reads, in one-letter code: Adenylosuccinate synthetase (426 aa).

Residues 12 to 18 (GDEGKGK) and 40 to 42 (GHT) each bind GTP. The active-site Proton acceptor is the Asp13. Mg(2+) contacts are provided by Asp13 and Gly40. Residues 13–16 (DEGK), 38–41 (NAGH), Thr130, Arg144, Gln224, Thr239, and Arg303 contribute to the IMP site. Residue His41 is the Proton donor of the active site. 299-305 (TVTNRVR) serves as a coordination point for substrate. GTP-binding positions include Arg305, 331 to 333 (KLD), and 413 to 415 (STG).

Belongs to the adenylosuccinate synthetase family. As to quaternary structure, homodimer. Mg(2+) serves as cofactor.

It is found in the cytoplasm. The catalysed reaction is IMP + L-aspartate + GTP = N(6)-(1,2-dicarboxyethyl)-AMP + GDP + phosphate + 2 H(+). It participates in purine metabolism; AMP biosynthesis via de novo pathway; AMP from IMP: step 1/2. Functionally, plays an important role in the de novo pathway of purine nucleotide biosynthesis. Catalyzes the first committed step in the biosynthesis of AMP from IMP. This Anaplasma marginale (strain St. Maries) protein is Adenylosuccinate synthetase.